The primary structure comprises 488 residues: MDYLNEDLQSVHDKLVAGDLTASQLVTDTLETIKTKEQQVDAFLTIDEKGAQEAAAKIDAQPIDADNLLAGMPIGIKDNLLTDGVTTTAASKMLANFKPVFDATVVEKLKAKKAIMIGKTNLDEFAMGSSTETSAFKKTKNPWDLDKVPGGSSGGSAAAVAAGEVVAALGTDTGGSIRQPAAFNGIVGIKPTYGRVSRWGAIAFASSLDQVGVFSRTVADNATVLQAISGHDEKDSTSADYEVPDFRAALNGDIKGMKIAVAKEYMAEGVEPAVKAQIETAIETFKSLGATVEEVSLPHSQYAVQTYYIIASSEASSNLSRFDGIRYGYRSPEAKTLEDVYVKSRSEGFGDEVKRRIMLGTFALSSGFYDAYFKKAGQMRTLIIQDFEKVFEDYDLVVGPTTPTTAFKLGDKGTDPVTMYMNDILTIPANMAGLPAMSVPAGLVDGMPVGLQIIGKAFDEESVYRAGYAFEQATEFNKNVPSFKGGQA.

Residues Lys-77 and Ser-152 each act as charge relay system in the active site. The active-site Acyl-ester intermediate is Ser-176.

It belongs to the amidase family. GatA subfamily. Heterotrimer of A, B and C subunits.

The catalysed reaction is L-glutamyl-tRNA(Gln) + L-glutamine + ATP + H2O = L-glutaminyl-tRNA(Gln) + L-glutamate + ADP + phosphate + H(+). In terms of biological role, allows the formation of correctly charged Gln-tRNA(Gln) through the transamidation of misacylated Glu-tRNA(Gln) in organisms which lack glutaminyl-tRNA synthetase. The reaction takes place in the presence of glutamine and ATP through an activated gamma-phospho-Glu-tRNA(Gln). The protein is Glutamyl-tRNA(Gln) amidotransferase subunit A of Latilactobacillus sakei subsp. sakei (strain 23K) (Lactobacillus sakei subsp. sakei).